Here is a 910-residue protein sequence, read N- to C-terminus: DNA mismatch repair protein MutS (910 aa).

615-622 (GPNMAGKS) is an ATP binding site.

This sequence belongs to the DNA mismatch repair MutS family.

Its function is as follows. This protein is involved in the repair of mismatches in DNA. It is possible that it carries out the mismatch recognition step. This protein has a weak ATPase activity. This Clostridium perfringens (strain ATCC 13124 / DSM 756 / JCM 1290 / NCIMB 6125 / NCTC 8237 / Type A) protein is DNA mismatch repair protein MutS.